Reading from the N-terminus, the 241-residue chain is Uridylate kinase (241 aa).

Residue 9-10 (GS) coordinates ATP. Glycine 44 lines the UMP pocket. ATP is bound by residues glycine 45 and arginine 49. Residues aspartate 66 and 114-120 (VTPGQTT) contribute to the UMP site. ATP is bound by residues threonine 140, tyrosine 146, and aspartate 149. The interval 222 to 241 (TDVIPTGSEEPIYWTGSSDA) is disordered.

The protein belongs to the UMP kinase family. As to quaternary structure, homohexamer.

Its subcellular location is the cytoplasm. The catalysed reaction is UMP + ATP = UDP + ADP. It functions in the pathway pyrimidine metabolism; CTP biosynthesis via de novo pathway; UDP from UMP (UMPK route): step 1/1. Inhibited by UTP. Functionally, catalyzes the reversible phosphorylation of UMP to UDP. The polypeptide is Uridylate kinase (Halorubrum lacusprofundi (strain ATCC 49239 / DSM 5036 / JCM 8891 / ACAM 34)).